A 328-amino-acid chain; its full sequence is DNA-directed RNA polymerase subunit alpha (328 aa).

The interval 1–231 is alpha N-terminal domain (alpha-NTD); it reads MIQQMQMPEK…DHVRLFSLFS (231 aa). The interval 252-328 is alpha C-terminal domain (alpha-CTD); sequence MRKLLMTRIE…MEVTKYRLNQ (77 aa).

Belongs to the RNA polymerase alpha chain family. As to quaternary structure, homodimer. The RNAP catalytic core consists of 2 alpha, 1 beta, 1 beta' and 1 omega subunit. When a sigma factor is associated with the core the holoenzyme is formed, which can initiate transcription.

The enzyme catalyses RNA(n) + a ribonucleoside 5'-triphosphate = RNA(n+1) + diphosphate. Its function is as follows. DNA-dependent RNA polymerase catalyzes the transcription of DNA into RNA using the four ribonucleoside triphosphates as substrates. The chain is DNA-directed RNA polymerase subunit alpha from Chloroherpeton thalassium (strain ATCC 35110 / GB-78).